Here is a 63-residue protein sequence, read N- to C-terminus: Large ribosomal subunit protein uL30 (63 aa).

This sequence belongs to the universal ribosomal protein uL30 family. In terms of assembly, part of the 50S ribosomal subunit.

The protein is Large ribosomal subunit protein uL30 of Chlorobium chlorochromatii (strain CaD3).